Consider the following 407-residue polypeptide: UDP-N-acetylglucosamine--N-acetylmuramyl-(pentapeptide) pyrophosphoryl-undecaprenol N-acetylglucosamine transferase (407 aa).

The segment at 1 to 21 (MNNSVREPTRGRRGSPPVADA) is disordered. UDP-N-acetyl-alpha-D-glucosamine is bound by residues 38 to 40 (TAG), Asn-157, Ser-228, and Gln-324.

This sequence belongs to the glycosyltransferase 28 family. MurG subfamily.

The protein resides in the cell membrane. The catalysed reaction is di-trans,octa-cis-undecaprenyl diphospho-N-acetyl-alpha-D-muramoyl-L-alanyl-D-glutamyl-meso-2,6-diaminopimeloyl-D-alanyl-D-alanine + UDP-N-acetyl-alpha-D-glucosamine = di-trans,octa-cis-undecaprenyl diphospho-[N-acetyl-alpha-D-glucosaminyl-(1-&gt;4)]-N-acetyl-alpha-D-muramoyl-L-alanyl-D-glutamyl-meso-2,6-diaminopimeloyl-D-alanyl-D-alanine + UDP + H(+). It participates in cell wall biogenesis; peptidoglycan biosynthesis. In terms of biological role, cell wall formation. Catalyzes the transfer of a GlcNAc subunit on undecaprenyl-pyrophosphoryl-MurNAc-pentapeptide (lipid intermediate I) to form undecaprenyl-pyrophosphoryl-MurNAc-(pentapeptide)GlcNAc (lipid intermediate II). In Mycobacterium leprae (strain TN), this protein is UDP-N-acetylglucosamine--N-acetylmuramyl-(pentapeptide) pyrophosphoryl-undecaprenol N-acetylglucosamine transferase.